The following is a 466-amino-acid chain: Cysteine--tRNA ligase (466 aa).

Cys-27 provides a ligand contact to Zn(2+). Positions 29 to 39 (PTVYDLAHIGN) match the 'HIGH' region motif. Zn(2+)-binding residues include Cys-211, His-236, and Glu-240. The short motif at 270-274 (KMSKS) is the 'KMSKS' region element. Lys-273 contacts ATP.

Belongs to the class-I aminoacyl-tRNA synthetase family. Monomer. Zn(2+) serves as cofactor.

The protein localises to the cytoplasm. The catalysed reaction is tRNA(Cys) + L-cysteine + ATP = L-cysteinyl-tRNA(Cys) + AMP + diphosphate. The chain is Cysteine--tRNA ligase from Anaplasma marginale (strain St. Maries).